A 338-amino-acid chain; its full sequence is Ornithine carbamoyltransferase (338 aa).

Carbamoyl phosphate-binding positions include 56–59 (STRT), Arg107, and 134–137 (HPTQ). L-ornithine contacts are provided by residues Asn168, Asp232, and 236 to 237 (SM). Carbamoyl phosphate contacts are provided by residues 274 to 275 (CL) and Arg320.

It belongs to the aspartate/ornithine carbamoyltransferase superfamily. OTCase family.

The protein resides in the cytoplasm. The catalysed reaction is carbamoyl phosphate + L-ornithine = L-citrulline + phosphate + H(+). The protein operates within amino-acid biosynthesis; L-arginine biosynthesis; L-arginine from L-ornithine and carbamoyl phosphate: step 1/3. Functionally, reversibly catalyzes the transfer of the carbamoyl group from carbamoyl phosphate (CP) to the N(epsilon) atom of ornithine (ORN) to produce L-citrulline. The polypeptide is Ornithine carbamoyltransferase (argI) (Buchnera aphidicola subsp. Acyrthosiphon pisum (strain APS) (Acyrthosiphon pisum symbiotic bacterium)).